A 284-amino-acid polypeptide reads, in one-letter code: ATP phosphoribosyltransferase (284 aa).

This sequence belongs to the ATP phosphoribosyltransferase family. Long subfamily. Requires Mg(2+) as cofactor.

The protein resides in the cytoplasm. The catalysed reaction is 1-(5-phospho-beta-D-ribosyl)-ATP + diphosphate = 5-phospho-alpha-D-ribose 1-diphosphate + ATP. It functions in the pathway amino-acid biosynthesis; L-histidine biosynthesis; L-histidine from 5-phospho-alpha-D-ribose 1-diphosphate: step 1/9. Its activity is regulated as follows. Feedback inhibited by histidine. Its function is as follows. Catalyzes the condensation of ATP and 5-phosphoribose 1-diphosphate to form N'-(5'-phosphoribosyl)-ATP (PR-ATP). Has a crucial role in the pathway because the rate of histidine biosynthesis seems to be controlled primarily by regulation of HisG enzymatic activity. The sequence is that of ATP phosphoribosyltransferase from Corynebacterium kroppenstedtii (strain DSM 44385 / JCM 11950 / CIP 105744 / CCUG 35717).